Here is a 22-residue protein sequence, read N- to C-terminus: Mu-conotoxin MIIIA (22 aa).

Gln1 bears the Pyrrolidone carboxylic acid mark. Cystine bridges form between Cys3–Cys15, Cys4–Cys21, and Cys10–Cys22. A Cysteine amide modification is found at Cys22.

Belongs to the conotoxin M superfamily. Expressed by the venom duct.

It is found in the secreted. Functionally, mu-conotoxins block voltage-gated sodium channels (Nav). This synthetic toxin potently blocks rNav1.3/SCN3A. It also moderately blocks rNav1.1/SCN1A, rNav1.2/SCN2A, rNav1.4/SCN4A, mNav1.6/SCN8A, and Nav1.7/SCN9A. sodium channels. This block is very slowly reversible. The sequence is that of Mu-conotoxin MIIIA from Conus magus (Magical cone).